Here is a 445-residue protein sequence, read N- to C-terminus: tRNA-2-methylthio-N(6)-dimethylallyladenosine synthase (445 aa).

An MTTase N-terminal domain is found at 2–117 (QGLYIKSYGC…LPELIVKARK (116 aa)). [4Fe-4S] cluster-binding residues include C11, C47, C80, C157, C161, and C164. One can recognise a Radical SAM core domain in the interval 143–374 (KNQKVSAFIS…QELVHKQQLE (232 aa)). The 65-residue stretch at 377 to 441 (KKMIGETHPV…KNHLTGIIPN (65 aa)) folds into the TRAM domain.

Belongs to the methylthiotransferase family. MiaB subfamily. Monomer. The cofactor is [4Fe-4S] cluster.

Its subcellular location is the cytoplasm. The catalysed reaction is N(6)-dimethylallyladenosine(37) in tRNA + (sulfur carrier)-SH + AH2 + 2 S-adenosyl-L-methionine = 2-methylsulfanyl-N(6)-dimethylallyladenosine(37) in tRNA + (sulfur carrier)-H + 5'-deoxyadenosine + L-methionine + A + S-adenosyl-L-homocysteine + 2 H(+). Catalyzes the methylthiolation of N6-(dimethylallyl)adenosine (i(6)A), leading to the formation of 2-methylthio-N6-(dimethylallyl)adenosine (ms(2)i(6)A) at position 37 in tRNAs that read codons beginning with uridine. In Ehrlichia ruminantium (strain Welgevonden), this protein is tRNA-2-methylthio-N(6)-dimethylallyladenosine synthase.